The sequence spans 762 residues: cGMP-dependent protein kinase 2 (762 aa).

The disordered stretch occupies residues 1–25 (MGNGSVKPKHSKHPDGHSGNLTTDA). Residue Gly2 is the site of N-myristoyl glycine attachment. Positions 23–85 (TDALRNKVTE…CIQLNKLQDV (63 aa)) form a coiled coil. Phosphoserine is present on residues Ser110 and Ser117. The segment at 117-138 (SRRGAKAGVSAEPTTRTYDLNK) is disordered. The tract at residues 168-283 (FLKRLDPQQI…DEQYRNFLRS (116 aa)) is cGMP-binding, high affinity; cAMP-binding, moderate affinity. 3',5'-cyclic AMP is bound by residues 232–235 (GELA) and 242–243 (RT). 3',5'-cyclic GMP contacts are provided by residues 232 to 235 (GELA), 242 to 243 (RT), Lys347, 356 to 359 (GEKA), 366 to 367 (RS), Asp412, and Arg415. The segment at 286–416 (LLKNLPEDKL…NLNRDDEKRH (131 aa)) is cGMP-binding, high affinity; cAMP-binding, low affinity. Ser431 is modified (phosphoserine). The Protein kinase domain occupies 453 to 711 (LEIIATLGVG…INDIKKHRWL (259 aa)). ATP-binding positions include 459–467 (LGVGGFGRV) and Lys482. The active-site Proton acceptor is the Asp576. The residue at position 609 (Thr609) is a Phosphothreonine. The AGC-kinase C-terminal domain maps to 712-762 (NGFNWEGLKARSLPSPLQRELKGPIDHSYFDKYPPEKGMPPDELSGWDKDF). Residues 740 to 762 (YFDKYPPEKGMPPDELSGWDKDF) are disordered.

This sequence belongs to the protein kinase superfamily. AGC Ser/Thr protein kinase family. cGMP subfamily. As to quaternary structure, interacts with GRIA1/GLUR1. Myristoylation mediates membrane localization. Highly concentrated in brain, lung and intestinal mucosa.

It is found in the apical cell membrane. It catalyses the reaction L-seryl-[protein] + ATP = O-phospho-L-seryl-[protein] + ADP + H(+). It carries out the reaction L-threonyl-[protein] + ATP = O-phospho-L-threonyl-[protein] + ADP + H(+). With respect to regulation, binding of cGMP results in enzyme activation. Its function is as follows. Crucial regulator of intestinal secretion and bone growth. Phosphorylates and activates CFTR on the plasma membrane. Plays a key role in intestinal secretion by regulating cGMP-dependent translocation of CFTR in jejunum. Acts downstream of NMDAR to activate the plasma membrane accumulation of GRIA1/GLUR1 in synapse and increase synaptic plasticity. Phosphorylates GRIA1/GLUR1 at Ser-863. Acts as a regulator of gene expression and activator of the extracellular signal-regulated kinases MAPK3/ERK1 and MAPK1/ERK2 in mechanically stimulated osteoblasts. Under fluid shear stress, mediates ERK activation and subsequent induction of FOS, FOSL1/FRA1, FOSL2/FRA2 and FOSB that play a key role in the osteoblast anabolic response to mechanical stimulation. The polypeptide is cGMP-dependent protein kinase 2 (PRKG2) (Homo sapiens (Human)).